The primary structure comprises 208 residues: Small ribosomal subunit protein uS3 (208 aa).

The KH type-2 domain occupies 16–85 (IDEYFKKELS…KPQIDVKPVE (70 aa)).

Belongs to the universal ribosomal protein uS3 family. Part of the 30S ribosomal subunit.

Functionally, binds the lower part of the 30S subunit head. This chain is Small ribosomal subunit protein uS3, found in Methanocaldococcus jannaschii (strain ATCC 43067 / DSM 2661 / JAL-1 / JCM 10045 / NBRC 100440) (Methanococcus jannaschii).